Consider the following 155-residue polypeptide: Transcription antitermination protein NusB (155 aa).

The protein belongs to the NusB family.

Functionally, involved in transcription antitermination. Required for transcription of ribosomal RNA (rRNA) genes. Binds specifically to the boxA antiterminator sequence of the ribosomal RNA (rrn) operons. This is Transcription antitermination protein NusB from Vibrio vulnificus (strain CMCP6).